Reading from the N-terminus, the 164-residue chain is Lectin (164 aa).

The first 15 residues, 1 to 15 (TVATILTILASTCMA), serve as a signal peptide directing secretion. The Bulb-type lectin domain maps to 16–125 (RNVLVNNEGL…DIWSTGTYRK (110 aa)). A disulfide bridge links Cys44 with Cys68.

In terms of assembly, homotetramer. Post-translationally, not glycosylated.

Its function is as follows. Mannose-specific lectin. Induces a Th1-type immune response in vitro. Causes a 4-fold increase in the proliferation of murine thymocytes and a significant increase in the production of nitric oxide at 24 hours in a macrophage cell line. Stimulates the production of the pro-inflammatory cytokines TNF and IL12 by rat peritoneal macrophages in a dose-dependent manner and of the cytokines IFNG and IL2 in murine thymocytes. Has hemagglutination activity towards rabbit erythrocytes. This is Lectin from Allium cepa (Onion).